The primary structure comprises 371 residues: Phospho-N-acetylmuramoyl-pentapeptide-transferase (371 aa).

9 helical membrane-spanning segments follow: residues 25 to 45, 77 to 94, 136 to 156, 172 to 192, 204 to 224, 240 to 260, 269 to 289, 296 to 316, and 348 to 368; these read TLLA…WLIA, MGGL…ALWA, IGWQ…HPAS, LIPH…IVGF, GLAI…AYVA, GTGE…AFLW, FMGD…AFMI, VIVG…VGVF, and KVVL…LATL.

This sequence belongs to the glycosyltransferase 4 family. MraY subfamily. Mg(2+) serves as cofactor.

It is found in the cell inner membrane. It carries out the reaction UDP-N-acetyl-alpha-D-muramoyl-L-alanyl-gamma-D-glutamyl-meso-2,6-diaminopimeloyl-D-alanyl-D-alanine + di-trans,octa-cis-undecaprenyl phosphate = di-trans,octa-cis-undecaprenyl diphospho-N-acetyl-alpha-D-muramoyl-L-alanyl-D-glutamyl-meso-2,6-diaminopimeloyl-D-alanyl-D-alanine + UMP. It participates in cell wall biogenesis; peptidoglycan biosynthesis. Catalyzes the initial step of the lipid cycle reactions in the biosynthesis of the cell wall peptidoglycan: transfers peptidoglycan precursor phospho-MurNAc-pentapeptide from UDP-MurNAc-pentapeptide onto the lipid carrier undecaprenyl phosphate, yielding undecaprenyl-pyrophosphoryl-MurNAc-pentapeptide, known as lipid I. The sequence is that of Phospho-N-acetylmuramoyl-pentapeptide-transferase from Opitutus terrae (strain DSM 11246 / JCM 15787 / PB90-1).